Consider the following 136-residue polypeptide: Large ribosomal subunit protein uL16c (136 aa).

It belongs to the universal ribosomal protein uL16 family. In terms of assembly, part of the 50S ribosomal subunit.

Its subcellular location is the plastid. The protein localises to the chloroplast. The protein is Large ribosomal subunit protein uL16c of Zea mays (Maize).